We begin with the raw amino-acid sequence, 879 residues long: Leucine--tRNA ligase (879 aa).

Residues 45–55 (PYPSGALHMGH) carry the 'HIGH' region motif. Positions 637–641 (KMSKS) match the 'KMSKS' region motif. Lys-640 serves as a coordination point for ATP.

It belongs to the class-I aminoacyl-tRNA synthetase family.

It is found in the cytoplasm. The enzyme catalyses tRNA(Leu) + L-leucine + ATP = L-leucyl-tRNA(Leu) + AMP + diphosphate. This is Leucine--tRNA ligase from Xylella fastidiosa (strain M23).